The primary structure comprises 185 residues: Transcriptional repressor NrdR (185 aa).

The disordered stretch occupies residues 1–24; it reads MRCPFCGGPDTQVKDSRPSEDSSA. The segment at 3–34 is a zinc-finger region; that stretch reads CPFCGGPDTQVKDSRPSEDSSAIRRRRVCPDC. Over residues 12–24 the composition is skewed to basic and acidic residues; that stretch reads QVKDSRPSEDSSA. Residues 49–139 form the ATP-cone domain; it reads LVVLKRSGKR…VYKNFREAQD (91 aa). The disordered stretch occupies residues 149 to 185; the sequence is ERLEGEGDLPEDGEAAPAPPDEVVAAPRRGRPARKRA. Residues 176–185 are compositionally biased toward basic residues; sequence RRGRPARKRA.

This sequence belongs to the NrdR family. Zn(2+) is required as a cofactor.

In terms of biological role, negatively regulates transcription of bacterial ribonucleotide reductase nrd genes and operons by binding to NrdR-boxes. This is Transcriptional repressor NrdR from Methylorubrum extorquens (strain PA1) (Methylobacterium extorquens).